A 72-amino-acid chain; its full sequence is Disintegrin basilicin (72 aa).

The region spanning 1-72 (AGEECDCGSP…ADCPRNHFHA (72 aa)) is the Disintegrin domain. 6 disulfides stabilise this stretch: cysteine 5/cysteine 20, cysteine 7/cysteine 15, cysteine 14/cysteine 37, cysteine 28/cysteine 34, cysteine 33/cysteine 58, and cysteine 46/cysteine 65. Positions 50 to 52 (RGD) match the Cell attachment site motif.

It belongs to the venom metalloproteinase (M12B) family. P-II subfamily. P-IIa sub-subfamily. As to quaternary structure, monomer (disintegrin). In terms of tissue distribution, expressed by the venom gland.

Its subcellular location is the secreted. Inhibits fibrinogen interaction with platelets. Acts by binding to alpha-IIb/beta-3 (ITGA2B/ITGB3) on the platelet surface and inhibits aggregation induced by ADP, thrombin, platelet-activating factor and collagen. The polypeptide is Disintegrin basilicin (Crotalus basiliscus (Mexican west-coast rattlesnake)).